Here is a 54-residue protein sequence, read N- to C-terminus: Pars intercerebralis major peptide D1 (54 aa).

This sequence belongs to the granulin family. Post-translationally, six disulfide bonds are present. In terms of tissue distribution, brain.

It localises to the secreted. The chain is Pars intercerebralis major peptide D1 from Locusta migratoria (Migratory locust).